The primary structure comprises 540 residues: Hydroxylamine reductase (540 aa).

[4Fe-4S] cluster-binding residues include C3, C6, C15, and C21. Hybrid [4Fe-2O-2S] cluster contacts are provided by H236, E260, C304, C395, C423, C448, E483, and K485. C395 carries the cysteine persulfide modification.

It belongs to the HCP family. [4Fe-4S] cluster serves as cofactor. The cofactor is hybrid [4Fe-2O-2S] cluster.

It localises to the cytoplasm. The enzyme catalyses A + NH4(+) + H2O = hydroxylamine + AH2 + H(+). In terms of biological role, catalyzes the reduction of hydroxylamine to form NH(3) and H(2)O. The polypeptide is Hydroxylamine reductase (Methanosarcina mazei (strain ATCC BAA-159 / DSM 3647 / Goe1 / Go1 / JCM 11833 / OCM 88) (Methanosarcina frisia)).